The chain runs to 214 residues: Large ribosomal subunit protein bL25 (214 aa).

A disordered region spans residues 178–214 (VEPEEEELPETDEEGEGAEGEAAEAAEGESAEGESEE). Residues 179–214 (EPEEEELPETDEEGEGAEGEAAEAAEGESAEGESEE) show a composition bias toward acidic residues.

This sequence belongs to the bacterial ribosomal protein bL25 family. CTC subfamily. As to quaternary structure, part of the 50S ribosomal subunit; part of the 5S rRNA/L5/L18/L25 subcomplex. Contacts the 5S rRNA. Binds to the 5S rRNA independently of L5 and L18.

Its function is as follows. This is one of the proteins that binds to the 5S RNA in the ribosome where it forms part of the central protuberance. The chain is Large ribosomal subunit protein bL25 from Corynebacterium jeikeium (strain K411).